Reading from the N-terminus, the 150-residue chain is Large ribosomal subunit protein bL9 (150 aa).

The protein belongs to the bacterial ribosomal protein bL9 family.

Binds to the 23S rRNA. The polypeptide is Large ribosomal subunit protein bL9 (Shewanella denitrificans (strain OS217 / ATCC BAA-1090 / DSM 15013)).